The sequence spans 532 residues: 2,3-bisphosphoglycerate-independent phosphoglycerate mutase (532 aa).

Mn(2+)-binding residues include D15 and S65. S65 functions as the Phosphoserine intermediate in the catalytic mechanism. Substrate-binding positions include H126, R156 to D157, R188, R194, R258 to R261, and K331. Residues D398, H402, D439, H440, and H457 each coordinate Mn(2+).

The protein belongs to the BPG-independent phosphoglycerate mutase family. As to quaternary structure, monomer. Mn(2+) is required as a cofactor.

The catalysed reaction is (2R)-2-phosphoglycerate = (2R)-3-phosphoglycerate. The protein operates within carbohydrate degradation; glycolysis; pyruvate from D-glyceraldehyde 3-phosphate: step 3/5. Functionally, catalyzes the interconversion of 2-phosphoglycerate and 3-phosphoglycerate. The chain is 2,3-bisphosphoglycerate-independent phosphoglycerate mutase from Trichodesmium erythraeum (strain IMS101).